Consider the following 668-residue polypeptide: DNA ligase (668 aa).

NAD(+) is bound by residues aspartate 34–aspartate 38, serine 83–leucine 84, and glutamate 113. Lysine 115 acts as the N6-AMP-lysine intermediate in catalysis. The NAD(+) site is built by arginine 136, glutamate 170, lysine 286, and lysine 310. Positions 404, 407, 422, and 427 each coordinate Zn(2+). The BRCT domain occupies aspartate 590 to lysine 668.

Belongs to the NAD-dependent DNA ligase family. LigA subfamily. It depends on Mg(2+) as a cofactor. Mn(2+) serves as cofactor.

It catalyses the reaction NAD(+) + (deoxyribonucleotide)n-3'-hydroxyl + 5'-phospho-(deoxyribonucleotide)m = (deoxyribonucleotide)n+m + AMP + beta-nicotinamide D-nucleotide.. Functionally, DNA ligase that catalyzes the formation of phosphodiester linkages between 5'-phosphoryl and 3'-hydroxyl groups in double-stranded DNA using NAD as a coenzyme and as the energy source for the reaction. It is essential for DNA replication and repair of damaged DNA. This Bacillus subtilis (strain 168) protein is DNA ligase.